Here is a 210-residue protein sequence, read N- to C-terminus: Superoxide dismutase [Mn], mitochondrial (210 aa).

Mn(2+)-binding residues include His-29, His-77, Asp-164, and His-168.

It belongs to the iron/manganese superoxide dismutase family. Homotetramer. It depends on Mn(2+) as a cofactor.

The protein resides in the mitochondrion matrix. It catalyses the reaction 2 superoxide + 2 H(+) = H2O2 + O2. Its function is as follows. Destroys superoxide anion radicals which are normally produced within the cells and which are toxic to biological systems. The chain is Superoxide dismutase [Mn], mitochondrial (sodB) from Aspergillus oryzae (strain ATCC 42149 / RIB 40) (Yellow koji mold).